The primary structure comprises 185 residues: ATP synthase subunit b 2 (185 aa).

The segment at 1–25 (MAESHGNAHGATAHTEADGGHKAPF) is disordered. A helical transmembrane segment spans residues 34–56 (ASQLVSLTIAFVALYLISSRLAL).

It belongs to the ATPase B chain family. As to quaternary structure, F-type ATPases have 2 components, F(1) - the catalytic core - and F(0) - the membrane proton channel. F(1) has five subunits: alpha(3), beta(3), gamma(1), delta(1), epsilon(1). F(0) has three main subunits: a(1), b(2) and c(10-14). The alpha and beta chains form an alternating ring which encloses part of the gamma chain. F(1) is attached to F(0) by a central stalk formed by the gamma and epsilon chains, while a peripheral stalk is formed by the delta and b chains.

It localises to the cell inner membrane. Its function is as follows. F(1)F(0) ATP synthase produces ATP from ADP in the presence of a proton or sodium gradient. F-type ATPases consist of two structural domains, F(1) containing the extramembraneous catalytic core and F(0) containing the membrane proton channel, linked together by a central stalk and a peripheral stalk. During catalysis, ATP synthesis in the catalytic domain of F(1) is coupled via a rotary mechanism of the central stalk subunits to proton translocation. Functionally, component of the F(0) channel, it forms part of the peripheral stalk, linking F(1) to F(0). The b'-subunit is a diverged and duplicated form of b found in plants and photosynthetic bacteria. This is ATP synthase subunit b 2 (atpF2) from Nitrobacter winogradskyi (strain ATCC 25391 / DSM 10237 / CIP 104748 / NCIMB 11846 / Nb-255).